The sequence spans 323 residues: Cyclin-dependent kinase 1 (323 aa).

Positions 4-306 (YQKIEKIGEG…AKQACMHPYF (303 aa)) constitute a Protein kinase domain. Residues 10–18 (IGEGTYGVV) and Lys-34 contribute to the ATP site. Thr-14 bears the Phosphothreonine mark. Tyr-15 is modified (phosphotyrosine). Asp-147 (proton acceptor) is an active-site residue. Thr-180 is modified (phosphothreonine; by CAK).

The protein belongs to the protein kinase superfamily. CMGC Ser/Thr protein kinase family. CDC2/CDKX subfamily. In terms of assembly, forms a stable but non-covalent complex with a regulatory subunit (SUC1) and with a cyclin.

The enzyme catalyses L-seryl-[protein] + ATP = O-phospho-L-seryl-[protein] + ADP + H(+). The catalysed reaction is L-threonyl-[protein] + ATP = O-phospho-L-threonyl-[protein] + ADP + H(+). Its activity is regulated as follows. Phosphorylation at Thr-14 or Tyr-15 inactivates the enzyme, while phosphorylation at Thr-180 activates it. Cyclin-dependent kinase that acts as a master regulator of the mitotic and meiotic cell cycles. This is Cyclin-dependent kinase 1 from Emericella nidulans (strain FGSC A4 / ATCC 38163 / CBS 112.46 / NRRL 194 / M139) (Aspergillus nidulans).